The following is a 347-amino-acid chain: Probable dual-specificity RNA methyltransferase RlmN (347 aa).

Glu-93 acts as the Proton acceptor in catalysis. Residues 99–333 (TEKRLTACLS…VSLRKSRGLD (235 aa)) enclose the Radical SAM core domain. A disulfide bond links Cys-106 and Cys-338. [4Fe-4S] cluster contacts are provided by Cys-113, Cys-117, and Cys-120. S-adenosyl-L-methionine is bound by residues 160-161 (GE), Ser-190, 219-221 (SLH), and Asn-295. Catalysis depends on Cys-338, which acts as the S-methylcysteine intermediate.

This sequence belongs to the radical SAM superfamily. RlmN family. The cofactor is [4Fe-4S] cluster.

Its subcellular location is the cytoplasm. It catalyses the reaction adenosine(2503) in 23S rRNA + 2 reduced [2Fe-2S]-[ferredoxin] + 2 S-adenosyl-L-methionine = 2-methyladenosine(2503) in 23S rRNA + 5'-deoxyadenosine + L-methionine + 2 oxidized [2Fe-2S]-[ferredoxin] + S-adenosyl-L-homocysteine. The enzyme catalyses adenosine(37) in tRNA + 2 reduced [2Fe-2S]-[ferredoxin] + 2 S-adenosyl-L-methionine = 2-methyladenosine(37) in tRNA + 5'-deoxyadenosine + L-methionine + 2 oxidized [2Fe-2S]-[ferredoxin] + S-adenosyl-L-homocysteine. Specifically methylates position 2 of adenine 2503 in 23S rRNA and position 2 of adenine 37 in tRNAs. This chain is Probable dual-specificity RNA methyltransferase RlmN, found in Prochlorococcus marinus (strain MIT 9301).